Consider the following 230-residue polypeptide: Cytochrome c-552 (230 aa).

The N-terminal stretch at 1-47 (MTTYLSQDRLRNKENDTMTYQHSKMYQSRTFLLFSALLLVAGQASAA) is a signal peptide. Heme c contacts are provided by C63, C66, H67, C166, C169, and H170.

In terms of processing, binds 2 heme c groups covalently per subunit.

It localises to the periplasm. Its function is as follows. Diheme, high potential cytochrome c. The chain is Cytochrome c-552 (cyc1) from Acidithiobacillus ferridurans.